We begin with the raw amino-acid sequence, 87 residues long: Transcriptional regulator PINT87aa (87 aa).

Interacts with PAF1 complex member PAF1. Interacts with transcription factor FOXM1. Expressed in brain, liver, kidney and stomach with lower levels in breast, intestine, thyroid and pancreas.

The protein localises to the nucleus. Functionally, enhances the binding of the PAF1 complex to target gene promoters and plays a role in negative regulation of transcription. May function as an anchor to keep the PAF1 complex on target gene promoters, sequentially pausing RNA polymerase II-induced mRNA elongation. Inhibits FOXM1-mediated transcription of PHB2. This chain is Transcriptional regulator PINT87aa, found in Homo sapiens (Human).